The chain runs to 317 residues: Methionyl-tRNA formyltransferase (317 aa).

S112–P115 is a binding site for (6S)-5,6,7,8-tetrahydrofolate.

The protein belongs to the Fmt family.

It catalyses the reaction L-methionyl-tRNA(fMet) + (6R)-10-formyltetrahydrofolate = N-formyl-L-methionyl-tRNA(fMet) + (6S)-5,6,7,8-tetrahydrofolate + H(+). Its function is as follows. Attaches a formyl group to the free amino group of methionyl-tRNA(fMet). The formyl group appears to play a dual role in the initiator identity of N-formylmethionyl-tRNA by promoting its recognition by IF2 and preventing the misappropriation of this tRNA by the elongation apparatus. This chain is Methionyl-tRNA formyltransferase, found in Actinobacillus succinogenes (strain ATCC 55618 / DSM 22257 / CCUG 43843 / 130Z).